Reading from the N-terminus, the 561-residue chain is Potassium-transporting ATPase potassium-binding subunit (561 aa).

12 helical membrane passes run 2-22, 65-85, 135-155, 177-197, 253-273, 280-300, 327-347, 353-373, 378-398, 413-433, 482-502, and 531-551; these read GLGLLQIGLTLCIVIAITPVL, YIRAILYTNLFMGILVYSLIH, ALGFLMFTSAATGLAVGIAFI, ILLPISVIGAIALVLLGVPQT, FIETIAMIAIPAAMIYTYGVF, AWLLFWMVFIVFVILVWVAAT, FGWAETALWAVMTTATMCGAV, ALMPQGLFATLFNLFLQIIWG, GTAYLFIYLILTVFLTGLMVG, IVLASLILLVHPIVVLIPSAI, LSTSLSILVGRYVPIIAMLLL, and AGIVLILGVLTFFPVLALGPI.

The protein belongs to the KdpA family. As to quaternary structure, the system is composed of three essential subunits: KdpA, KdpB and KdpC.

It is found in the cell membrane. In terms of biological role, part of the high-affinity ATP-driven potassium transport (or Kdp) system, which catalyzes the hydrolysis of ATP coupled with the electrogenic transport of potassium into the cytoplasm. This subunit binds the extracellular potassium ions and delivers the ions to the membrane domain of KdpB through an intramembrane tunnel. The protein is Potassium-transporting ATPase potassium-binding subunit of Anabaena sp. (strain L31).